The primary structure comprises 181 residues: Inner membrane-spanning protein YciB (181 aa).

A run of 5 helical transmembrane segments spans residues 10–30, 50–70, 80–100, 120–140, and 148–168; these read LIIFFALYKFYDIYVATGALI, MQLITFVMVALFGGMTLALHD, IVYVVFALGLTISQIMGKPAI, WAWVMFFSGCAALNLYVAYHL, and FKVFGLLAATLVFTLLTGGYI.

The protein belongs to the YciB family.

It localises to the cell inner membrane. Its function is as follows. Plays a role in cell envelope biogenesis, maintenance of cell envelope integrity and membrane homeostasis. The sequence is that of Inner membrane-spanning protein YciB from Vibrio cholerae serotype O1 (strain ATCC 39315 / El Tor Inaba N16961).